Here is a 600-residue protein sequence, read N- to C-terminus: Jacalin-related lectin 18 (600 aa).

4 consecutive Jacalin-type lectin domains span residues 12-158 (TQRL…YFTC), 161-303 (PTRM…YFTT), 304-447 (SPFI…YFRL), and 454-597 (GEKV…HVLP).

The protein belongs to the jacalin lectin family.

This chain is Jacalin-related lectin 18 (JAL18), found in Arabidopsis thaliana (Mouse-ear cress).